The chain runs to 238 residues: Ribonuclease PH (238 aa).

Phosphate is bound by residues Arg-86 and Gly-124–Arg-126.

Belongs to the RNase PH family. Homohexameric ring arranged as a trimer of dimers.

The catalysed reaction is tRNA(n+1) + phosphate = tRNA(n) + a ribonucleoside 5'-diphosphate. In terms of biological role, phosphorolytic 3'-5' exoribonuclease that plays an important role in tRNA 3'-end maturation. Removes nucleotide residues following the 3'-CCA terminus of tRNAs; can also add nucleotides to the ends of RNA molecules by using nucleoside diphosphates as substrates, but this may not be physiologically important. Probably plays a role in initiation of 16S rRNA degradation (leading to ribosome degradation) during starvation. The chain is Ribonuclease PH from Vibrio cholerae serotype O1 (strain ATCC 39315 / El Tor Inaba N16961).